Reading from the N-terminus, the 436-residue chain is Homeobox protein PKNOX1 (436 aa).

The segment covering 1–20 (MMATQTLSIDSYQDGQQMQV) has biased composition (polar residues). The interval 1 to 49 (MMATQTLSIDSYQDGQQMQVVTELKTEQDPNCSEPDAEGVSPPPVESQT) is disordered. Phosphoserine is present on residues S33 and S41. The 84-residue stretch at 80–163 (GSEGTTSASF…MNSETLLSGE (84 aa)) folds into the MEIS N-terminal domain. The homeobox; TALE-type DNA-binding region spans 259 to 321 (SKNKRGVLPK…NARRRILQPM (63 aa)). Positions 401 to 436 (AGQSEDESVDSTEEDAGALAPAHISGLVLENSDSLQ) are disordered. Over residues 404 to 416 (SEDESVDSTEEDA) the composition is skewed to acidic residues.

Belongs to the TALE/MEIS homeobox family. Interacts with MN1. In terms of tissue distribution, ubiquitous. Isoform 2 is expressed in all examined tissues except in bone marrow.

The protein resides in the nucleus. In terms of biological role, activates transcription in the presence of PBX1A and HOXA1. This is Homeobox protein PKNOX1 from Homo sapiens (Human).